Here is a 136-residue protein sequence, read N- to C-terminus: Aspartate 1-decarboxylase (136 aa).

Ser-25 acts as the Schiff-base intermediate with substrate; via pyruvic acid in catalysis. Ser-25 is subject to Pyruvic acid (Ser). Residue Thr-57 participates in substrate binding. The active-site Proton donor is Tyr-58. 73-75 (GAA) provides a ligand contact to substrate.

It belongs to the PanD family. Heterooctamer of four alpha and four beta subunits. Pyruvate serves as cofactor. In terms of processing, is synthesized initially as an inactive proenzyme, which is activated by self-cleavage at a specific serine bond to produce a beta-subunit with a hydroxyl group at its C-terminus and an alpha-subunit with a pyruvoyl group at its N-terminus.

The protein localises to the cytoplasm. The enzyme catalyses L-aspartate + H(+) = beta-alanine + CO2. Its pathway is cofactor biosynthesis; (R)-pantothenate biosynthesis; beta-alanine from L-aspartate: step 1/1. Functionally, catalyzes the pyruvoyl-dependent decarboxylation of aspartate to produce beta-alanine. The polypeptide is Aspartate 1-decarboxylase (Corynebacterium glutamicum (strain R)).